The chain runs to 227 residues: tRNA (guanine-N(7)-)-methyltransferase (227 aa).

Positions 57, 82, 109, and 132 each coordinate S-adenosyl-L-methionine. Residue Asp-132 is part of the active site. Substrate-binding positions include Lys-136, Asp-168, and 205 to 208; that span reads TKFE.

It belongs to the class I-like SAM-binding methyltransferase superfamily. TrmB family.

It carries out the reaction guanosine(46) in tRNA + S-adenosyl-L-methionine = N(7)-methylguanosine(46) in tRNA + S-adenosyl-L-homocysteine. The protein operates within tRNA modification; N(7)-methylguanine-tRNA biosynthesis. In terms of biological role, catalyzes the formation of N(7)-methylguanine at position 46 (m7G46) in tRNA. This Leifsonia xyli subsp. xyli (strain CTCB07) protein is tRNA (guanine-N(7)-)-methyltransferase.